A 360-amino-acid polypeptide reads, in one-letter code: Peptide chain release factor 1 (360 aa).

Residue glutamine 235 is modified to N5-methylglutamine. Over residues 283 to 308 (MQKRQQAEASERRNLLGSGDRSDRNR) the composition is skewed to basic and acidic residues. Residues 283–313 (MQKRQQAEASERRNLLGSGDRSDRNRTYNFP) are disordered.

This sequence belongs to the prokaryotic/mitochondrial release factor family. Post-translationally, methylated by PrmC. Methylation increases the termination efficiency of RF1.

Its subcellular location is the cytoplasm. Its function is as follows. Peptide chain release factor 1 directs the termination of translation in response to the peptide chain termination codons UAG and UAA. The chain is Peptide chain release factor 1 from Yersinia enterocolitica serotype O:8 / biotype 1B (strain NCTC 13174 / 8081).